We begin with the raw amino-acid sequence, 83 residues long: Small ribosomal subunit protein bS16 (83 aa).

It belongs to the bacterial ribosomal protein bS16 family.

This chain is Small ribosomal subunit protein bS16, found in Shewanella baltica (strain OS223).